The chain runs to 363 residues: Capsid protein (363 aa).

Positions 72-111 form a coiled coil; that stretch reads KKVEELNESLKAAILAGAEAEDLRNKLKDISQRYASQLEI. A disordered region spans residues 122-144; the sequence is LKKKGHEQPLTGSGSSEPVHAES.

The protein resides in the virion. This is Capsid protein from Citrus leaf blotch virus (isolate Nagami kumquat/France/SRA-153/1984) (CLBV).